A 201-amino-acid polypeptide reads, in one-letter code: Ras-related protein Rab-5A (201 aa).

GTP contacts are provided by residues 16–24 (GEAAVGKSS), 35–41 (LDYQEST), 64–68 (DTAGQ), 122–125 (NKLD), and 152–154 (SAK). Positions 38 to 46 (QESTIGAAF) match the Effector region motif. 2 S-geranylgeranyl cysteine lipidation sites follow: C199 and C200.

It belongs to the small GTPase superfamily. Rab family.

The protein resides in the cell membrane. The protein localises to the endosome membrane. With respect to regulation, regulated by guanine nucleotide exchange factors (GEFs) which promote the exchange of bound GDP for free GTP. Its function is as follows. Required for the fusion of plasma membranes and early endosomes. This is Ras-related protein Rab-5A (rab5A) from Dictyostelium discoideum (Social amoeba).